A 546-amino-acid chain; its full sequence is MVVLAASITTRQGKPLLSRQFKDLSKDRVLELLSNFQNLVSEISSDHTFVEDKHVRYVYRPFDNYYIILITNRQSNIIKDLATLNLFSQTINSYLSSFQDQEIFHNAFEILSSFDEIVSMGGYKENLSFTQVQTYLSMESHEERIQEIIERNKEIEATEERKRRAKEIARKEHERKHGFMSSNGDYDGANRFMGSKDPNVTNAINSYYSHASPAAQQSYLQSSHAAAAEVAPVASPMATSQRAGHSATGGMKLGGGAGRRAGAAPRPSAISSASSGTPPPPEEDVPENNGILISIKEVINAEFSRDGTIHSSELKGVLELRINDHDLSHSNLKLADSIDVRDKSFQFKTHPNIDKQSFLSTKLISLRDKSKAFPANDQSLGVLRWRKVAPAEDDSLIPLTLTTWVSPSESQQGFDVIIEYESVLETELADVIFTIPVFPQEPVDINTESSTCSDAEVVNMDQEMGTSIKISKIAANDAGALAFTIEAPYEDALYPMTVSFQESTRDKLAKSFTGMAIQSVVMANDHDQELPYDVITSLKSDEYLVQ.

Residues 190 to 440 (NRFMGSKDPN…VIFTIPVFPQ (251 aa)) are interaction with DSL1. Residues 236-287 (PMATSQRAGHSATGGMKLGGGAGRRAGAAPRPSAISSASSGTPPPPEEDVPE) form a disordered region. Residues 260–276 (RAGAAPRPSAISSASSG) show a composition bias toward low complexity. Thr277 carries the post-translational modification Phosphothreonine. The region spanning 288–546 (NNGILISIKE…SLKSDEYLVQ (259 aa)) is the MHD domain.

The protein belongs to the adaptor complexes medium subunit family. Delta-COP subfamily. Oligomeric complex that consists of at least the alpha, beta, beta', gamma, delta, epsilon and zeta subunits. Interacts with DSL1.

Its subcellular location is the cytoplasm. It localises to the golgi apparatus membrane. The protein resides in the cytoplasmic vesicle. The protein localises to the COPI-coated vesicle membrane. Functionally, the coatomer is a cytosolic protein complex that binds to dilysine motifs and reversibly associates with Golgi non-clathrin-coated vesicles, which further mediate biosynthetic protein transport from the ER, via the Golgi up to the trans Golgi network. Coatomer complex is required for budding from Golgi membranes, and is essential for the retrograde Golgi-to-ER transport of dilysine-tagged proteins. The sequence is that of Coatomer subunit delta (RET2) from Saccharomyces cerevisiae (strain ATCC 204508 / S288c) (Baker's yeast).